The chain runs to 428 residues: Serine--tRNA ligase (428 aa).

236-238 (TAE) provides a ligand contact to L-serine. 267-269 (RSE) lines the ATP pocket. E290 provides a ligand contact to L-serine. Position 354–357 (354–357 (EISS)) interacts with ATP. Residue S388 coordinates L-serine.

This sequence belongs to the class-II aminoacyl-tRNA synthetase family. Type-1 seryl-tRNA synthetase subfamily. In terms of assembly, homodimer. The tRNA molecule binds across the dimer.

It localises to the cytoplasm. The catalysed reaction is tRNA(Ser) + L-serine + ATP = L-seryl-tRNA(Ser) + AMP + diphosphate + H(+). It catalyses the reaction tRNA(Sec) + L-serine + ATP = L-seryl-tRNA(Sec) + AMP + diphosphate + H(+). It participates in aminoacyl-tRNA biosynthesis; selenocysteinyl-tRNA(Sec) biosynthesis; L-seryl-tRNA(Sec) from L-serine and tRNA(Sec): step 1/1. Catalyzes the attachment of serine to tRNA(Ser). Is also able to aminoacylate tRNA(Sec) with serine, to form the misacylated tRNA L-seryl-tRNA(Sec), which will be further converted into selenocysteinyl-tRNA(Sec). The protein is Serine--tRNA ligase of Psychrobacter cryohalolentis (strain ATCC BAA-1226 / DSM 17306 / VKM B-2378 / K5).